The sequence spans 253 residues: Retinoic acid early-inducible protein 1-gamma (253 aa).

An N-terminal signal peptide occupies residues M1–G28. A disulfide bridge connects residues C37 and C56. N-linked (GlcNAc...) asparagine glycosylation is found at N38, N70, N83, N143, and N156. A disulfide bridge connects residues C90 and C190. The tract at residues L198 to T230 is disordered. The span at S211–S221 shows a compositional bias: low complexity. A lipid anchor (GPI-anchor amidated serine) is attached at S227. A propeptide spans H228–M253 (removed in mature form).

Belongs to the NKG2D ligand family. Glycosylated. In terms of tissue distribution, expressed predominantly in embryonic brain.

Its subcellular location is the cell membrane. Its function is as follows. Acts as a ligand for KLRK1. This chain is Retinoic acid early-inducible protein 1-gamma (Raet1c), found in Mus musculus (Mouse).